Reading from the N-terminus, the 214-residue chain is ATP-dependent dethiobiotin synthetase BioD (214 aa).

10–15 (GIGKTY) is an ATP binding site. A Mg(2+)-binding site is contributed by Thr14. Lys35 is a catalytic residue. Thr39 contributes to the substrate binding site. ATP contacts are provided by residues Asp44, 109–112 (EGAG), and 169–170 (NC). Residues Asp44 and Glu109 each contribute to the Mg(2+) site.

It belongs to the dethiobiotin synthetase family. In terms of assembly, homodimer. Mg(2+) serves as cofactor.

The protein resides in the cytoplasm. The catalysed reaction is (7R,8S)-7,8-diammoniononanoate + CO2 + ATP = (4R,5S)-dethiobiotin + ADP + phosphate + 3 H(+). It functions in the pathway cofactor biosynthesis; biotin biosynthesis; biotin from 7,8-diaminononanoate: step 1/2. Functionally, catalyzes a mechanistically unusual reaction, the ATP-dependent insertion of CO2 between the N7 and N8 nitrogen atoms of 7,8-diaminopelargonic acid (DAPA, also called 7,8-diammoniononanoate) to form a ureido ring. In Methanocaldococcus jannaschii (strain ATCC 43067 / DSM 2661 / JAL-1 / JCM 10045 / NBRC 100440) (Methanococcus jannaschii), this protein is ATP-dependent dethiobiotin synthetase BioD.